The chain runs to 334 residues: GTP 3',8-cyclase (334 aa).

One can recognise a Radical SAM core domain in the interval 11 to 236 (GFNRKIDYLR…ESTESSQGPA (226 aa)). Arg20 contacts GTP. [4Fe-4S] cluster contacts are provided by Cys27 and Cys31. Position 33 (Tyr33) interacts with S-adenosyl-L-methionine. Cys34 provides a ligand contact to [4Fe-4S] cluster. GTP is bound at residue Arg69. Gly73 is an S-adenosyl-L-methionine binding site. Thr100 is a GTP binding site. S-adenosyl-L-methionine is bound at residue Ser124. A GTP-binding site is contributed by Lys161. Residue Met195 participates in S-adenosyl-L-methionine binding. [4Fe-4S] cluster-binding residues include Cys260 and Cys263. 265–267 (RVR) is a binding site for GTP. A [4Fe-4S] cluster-binding site is contributed by Cys277.

Belongs to the radical SAM superfamily. MoaA family. In terms of assembly, monomer and homodimer. The cofactor is [4Fe-4S] cluster.

The enzyme catalyses GTP + AH2 + S-adenosyl-L-methionine = (8S)-3',8-cyclo-7,8-dihydroguanosine 5'-triphosphate + 5'-deoxyadenosine + L-methionine + A + H(+). The protein operates within cofactor biosynthesis; molybdopterin biosynthesis. Functionally, catalyzes the cyclization of GTP to (8S)-3',8-cyclo-7,8-dihydroguanosine 5'-triphosphate. In Pseudomonas putida (strain GB-1), this protein is GTP 3',8-cyclase.